The primary structure comprises 637 residues: Neutral ceramidase (637 aa).

Residue His34 participates in Mg(2+) binding. Residues His96 and His204 each coordinate Zn(2+). The active-site Nucleophile is Ser256. Zn(2+) contacts are provided by Glu417 and Tyr453. Mg(2+) is bound by residues Asp575, Asp577, and Thr580.

It belongs to the neutral ceramidase family. The cofactor is Zn(2+). It depends on Mg(2+) as a cofactor.

The enzyme catalyses an N-acylsphing-4-enine + H2O = sphing-4-enine + a fatty acid. It carries out the reaction an N-acylsphinganine + H2O = sphinganine + a fatty acid. The catalysed reaction is an N-acyl-(4R)-4-hydroxysphinganine + H2O = (4R)-hydroxysphinganine + a fatty acid. It catalyses the reaction N-(9Z-octadecenoyl)-sphing-4-enine + H2O = sphing-4-enine + (9Z)-octadecenoate. The enzyme catalyses N-(hexanoyl)sphing-4-enine + H2O = hexanoate + sphing-4-enine. It carries out the reaction N-hexadecanoylsphing-4-enine + H2O = sphing-4-enine + hexadecanoate. The catalysed reaction is N-octadecanoylsphing-4-enine + H2O = sphing-4-enine + octadecanoate. It catalyses the reaction N-eicosanoyl-sphing-4-enine + H2O = eicosanoate + sphing-4-enine. The enzyme catalyses N-(15Z-tetracosenoyl)-sphing-4-enine + H2O = (15Z)-tetracosenoate + sphing-4-enine. It carries out the reaction N-tetracosanoyl-sphing-4-enine + H2O = tetracosanoate + sphing-4-enine. With respect to regulation, 90% of activity is inhibited by nickel, zinc and calcium ions. Magnesium, cobalt, copper and manganese ions inhibit between 50 and 80% of activity. Catalyzes the cleavage of the N-acyl linkage of the ceramides (Cers) to yield sphingosine (Sph) and free fatty acid. Also catalyzes the synthesis of Cers from Sph and fatty acid. Cers containning C6-C24 fatty acids are well hydrolyzed, and Cers with mono unsaturated fatty acids are much more hydrolyzed than those with saturated fatty acids. In Mycobacterium tuberculosis (strain ATCC 25618 / H37Rv), this protein is Neutral ceramidase.